Here is a 496-residue protein sequence, read N- to C-terminus: NADP-dependent glyceraldehyde-3-phosphate dehydrogenase (496 aa).

Substrate is bound by residues R116 and 169-170; that span reads NY. Residues K192, T195, and D230 each coordinate NADP(+). Position 245-249 (245-249) interacts with NAD(+); the sequence is GGDTG. E264 functions as the Proton acceptor in the catalytic mechanism. 297-299 is a binding site for substrate; that stretch reads RCT. The Nucleophile role is filled by C298. Residue E391 participates in NADP(+) binding. R451 lines the substrate pocket.

The protein belongs to the aldehyde dehydrogenase family.

It is found in the cytoplasm. It catalyses the reaction D-glyceraldehyde 3-phosphate + NADP(+) + H2O = (2R)-3-phosphoglycerate + NADPH + 2 H(+). In terms of biological role, important as a means of generating NADPH for biosynthetic reactions. The polypeptide is NADP-dependent glyceraldehyde-3-phosphate dehydrogenase (GAPN) (Nicotiana plumbaginifolia (Leadwort-leaved tobacco)).